The following is a 349-amino-acid chain: Aspartate carbamoyltransferase catalytic subunit (349 aa).

The carbamoyl phosphate site is built by arginine 59 and threonine 60. Lysine 87 is an L-aspartate binding site. Arginine 109, histidine 142, and glutamine 145 together coordinate carbamoyl phosphate. Arginine 182 and arginine 253 together coordinate L-aspartate. Residues glycine 294 and proline 295 each coordinate carbamoyl phosphate.

The protein belongs to the aspartate/ornithine carbamoyltransferase superfamily. ATCase family. Heterododecamer (2C3:3R2) of six catalytic PyrB chains organized as two trimers (C3), and six regulatory PyrI chains organized as three dimers (R2).

It carries out the reaction carbamoyl phosphate + L-aspartate = N-carbamoyl-L-aspartate + phosphate + H(+). It functions in the pathway pyrimidine metabolism; UMP biosynthesis via de novo pathway; (S)-dihydroorotate from bicarbonate: step 2/3. In terms of biological role, catalyzes the condensation of carbamoyl phosphate and aspartate to form carbamoyl aspartate and inorganic phosphate, the committed step in the de novo pyrimidine nucleotide biosynthesis pathway. The chain is Aspartate carbamoyltransferase catalytic subunit from Synechococcus sp. (strain CC9902).